The chain runs to 257 residues: GTP cyclohydrolase FolE2 (257 aa).

This sequence belongs to the GTP cyclohydrolase IV family.

It carries out the reaction GTP + H2O = 7,8-dihydroneopterin 3'-triphosphate + formate + H(+). Its pathway is cofactor biosynthesis; 7,8-dihydroneopterin triphosphate biosynthesis; 7,8-dihydroneopterin triphosphate from GTP: step 1/1. In terms of biological role, converts GTP to 7,8-dihydroneopterin triphosphate. This is GTP cyclohydrolase FolE2 from Syntrophobacter fumaroxidans (strain DSM 10017 / MPOB).